The following is a 105-amino-acid chain: Vacuolar ATPase assembly integral membrane protein VMA21 homolog (105 aa).

The tract at residues 1–26 (MSTKNKKAAGGNGGAPKQTRQQSHDS) is disordered. At 1 to 36 (MSTKNKKAAGGNGGAPKQTRQQSHDSQDYSSFKTVL) the chain is on the cytoplasmic side. A helical transmembrane segment spans residues 37 to 57 (FYCMLIVFLPVLTFFVLKGFV). At 58–68 (LDQFLDISEVK) the chain is on the lumenal side. Residues 69–89 (VNIASAVGAVVALHIALGLYI) traverse the membrane as a helical segment. The Cytoplasmic portion of the chain corresponds to 90–105 (YRAYFGTTGSKASKTD).

This sequence belongs to the VMA21 family.

It localises to the endoplasmic reticulum membrane. It is found in the endoplasmic reticulum-Golgi intermediate compartment membrane. The protein localises to the cytoplasmic vesicle. The protein resides in the COPII-coated vesicle membrane. Its function is as follows. Required for the assembly of the V0 complex of the vacuolar ATPase (V-ATPase) in the endoplasmic reticulum. The sequence is that of Vacuolar ATPase assembly integral membrane protein VMA21 homolog from Drosophila erecta (Fruit fly).